We begin with the raw amino-acid sequence, 121 residues long: Cell division protein FtsB (121 aa).

Topologically, residues 1–6 are cytoplasmic; it reads MRNWRW. The helical transmembrane segment at 7-24 threads the bilayer; sequence LLLVLAVLLAWLQYRFWF. Topologically, residues 25-121 are periplasmic; that stretch reads GPGNSGEVMM…AASADPVDHP (97 aa). Residues 31 to 66 are a coiled coil; it reads EVMMLEAQVAHQTRDNEGLRQRNQALAAEVKDLKDG. The disordered stretch occupies residues 98-121; that stretch reads PPAAQEAAPPAQPPAASADPVDHP.

This sequence belongs to the FtsB family. In terms of assembly, part of a complex composed of FtsB, FtsL and FtsQ.

The protein localises to the cell inner membrane. Its function is as follows. Essential cell division protein. May link together the upstream cell division proteins, which are predominantly cytoplasmic, with the downstream cell division proteins, which are predominantly periplasmic. The chain is Cell division protein FtsB from Xanthomonas campestris pv. campestris (strain 8004).